Consider the following 511-residue polypeptide: Maturase K (511 aa).

The protein belongs to the intron maturase 2 family. MatK subfamily.

The protein localises to the plastid. The protein resides in the chloroplast. In terms of biological role, usually encoded in the trnK tRNA gene intron. Probably assists in splicing its own and other chloroplast group II introns. This Pistia stratiotes (Water lettuce) protein is Maturase K.